The chain runs to 352 residues: MVFRIASSPYTHNQRQTSRIMLLVLIAALPGVAAQTWFFGWGTLFQIVLAAVTALFAEAIVLSLRKQSIASRLKDYSALLTGLLLAVSIPPLAPWWMIVLGTGFAIIIAKQLYGGLGQNPFNPAMIGYVVLLISFPVQMTSWLPPYEIAATTPDMLDTLRMIFTGHTASGGDLTLLRIGIDGISQATPLDTFKTSLRAGHSVKQIMQYPIYSGVLAGVGWQWVNLAWLVGGVFLLWQKTIRWHIPVSFLVTLALCATLGWLFSPGTLASPQLHLLSGATMLGAFFILTDPVTASTTNRGRLIFGALAGVLVWLIRSFGGYPDGVAFAVLLANITVPLIDYYTRPRVYGHRKG.

Helical transmembrane passes span 20-40, 44-64, 78-109, and 123-143; these read IMLL…WFFG, LFQI…VLSL, ALLT…IIIA, and PAMI…TSWL. Thr-187 is subject to FMN phosphoryl threonine. Helical transmembrane passes span 214-234, 242-262, 267-287, 301-321, and 322-342; these read VLAG…GVFL, WHIP…GWLF, LASP…FFIL, LIFG…GGYP, and DGVA…DYYT.

It belongs to the NqrB/RnfD family. The complex is composed of six subunits: RsxA, RsxB, RsxC, RsxD, RsxE and RsxG. Requires FMN as cofactor.

It is found in the cell inner membrane. Part of a membrane-bound complex that couples electron transfer with translocation of ions across the membrane. Required to maintain the reduced state of SoxR. This Salmonella arizonae (strain ATCC BAA-731 / CDC346-86 / RSK2980) protein is Ion-translocating oxidoreductase complex subunit D.